Reading from the N-terminus, the 434-residue chain is F-box/LRR-repeat protein 21 (434 aa).

The region spanning 39–85 is the F-box domain; sequence LLDWGTLPHHVILQIFQYLPLIDRARASSVCRRWNEVFHIPDLWRKF. LRR repeat units follow at residues 187 to 213, 214 to 239, 242 to 265, 322 to 347, 349 to 374, and 375 to 400; these read DTPVDDPSLKILVANNSDTLRLLKMSS, CPHVSSDGILCVADHCQGLRELALNY, LSDEILLALSSETHVNLEHLRIDV, GRSVSRAILGRIGLNCPRLIELVVCA, GLLPLDSELIRIAKHCKNLTSLGLSE, and CEVSCSAFVEFVRLCGRRLTQLSIME.

As to quaternary structure, part of the SCF (SKP1-CUL1-F-box) E3 ubiquitin-protein ligase complex SCF(FBXL21) composed of CUL1, SKP1, RBX1 and FBXL21. Interacts with CRY1 and CRY2. In terms of tissue distribution, expressed in the hypothalamus, especially in the suprachiasmatic nucleus (SCN). Expression is driven by the core-clock. There is a pronounced diurnal and circadian expression rhythms rising rapidly at the start of the day and declining at the onset of the night.

The protein localises to the cytoplasm. It localises to the cytosol. The protein resides in the nucleus. It functions in the pathway protein modification; protein ubiquitination. Its function is as follows. Substrate-recognition component of the SCF(FBXL21) E3 ubiquitin ligase complex involved in circadian rhythm function. Plays a key role in the maintenance of both the speed and the robustness of the circadian clock oscillation. The SCF(FBXL21) complex mainly acts in the cytosol and mediates ubiquitination of CRY proteins (CRY1 and CRY2), leading to CRY proteins stabilization. The SCF(FBXL21) complex counteracts the activity of the SCF(FBXL3) complex and protects CRY proteins from degradation. Involved in the hypothalamic suprachiasmatic nucleus (SCN) clock regulating temporal organization of the daily activities. This chain is F-box/LRR-repeat protein 21 (Fbxl21), found in Mus musculus (Mouse).